A 473-amino-acid chain; its full sequence is tRNA-2-methylthio-N(6)-dimethylallyladenosine synthase (473 aa).

The MTTase N-terminal domain maps to M3–E120. Positions 12, 49, 83, 157, 161, and 164 each coordinate [4Fe-4S] cluster. One can recognise a Radical SAM core domain in the interval K143–G375. The region spanning R378 to R441 is the TRAM domain.

It belongs to the methylthiotransferase family. MiaB subfamily. As to quaternary structure, monomer. [4Fe-4S] cluster is required as a cofactor.

It localises to the cytoplasm. The enzyme catalyses N(6)-dimethylallyladenosine(37) in tRNA + (sulfur carrier)-SH + AH2 + 2 S-adenosyl-L-methionine = 2-methylsulfanyl-N(6)-dimethylallyladenosine(37) in tRNA + (sulfur carrier)-H + 5'-deoxyadenosine + L-methionine + A + S-adenosyl-L-homocysteine + 2 H(+). Its function is as follows. Catalyzes the methylthiolation of N6-(dimethylallyl)adenosine (i(6)A), leading to the formation of 2-methylthio-N6-(dimethylallyl)adenosine (ms(2)i(6)A) at position 37 in tRNAs that read codons beginning with uridine. In Psychromonas ingrahamii (strain DSM 17664 / CCUG 51855 / 37), this protein is tRNA-2-methylthio-N(6)-dimethylallyladenosine synthase.